We begin with the raw amino-acid sequence, 511 residues long: Glutamate/gamma-aminobutyrate antiporter (511 aa).

The Cytoplasmic segment spans residues 1–14; the sequence is MATLVQTGKAKQLT. A helical membrane pass occupies residues 15–35; that stretch reads LLGFFAITASMVMAVYEYPTF. The Periplasmic segment spans residues 36 to 41; the sequence is ATSGFS. The helical transmembrane segment at 42–62 threads the bilayer; the sequence is LVFFLLLGGILWFIPVGLCAA. Topologically, residues 63-93 are cytoplasmic; it reads EMATVDGWEEGGVFAWVSNTLGPRWGFAAIS. Residues 94–114 traverse the membrane as a helical segment; the sequence is FGYLQIAIGFIPMLYFVLGAL. The Periplasmic segment spans residues 115 to 127; it reads SYILKWPALNEDP. A helical membrane pass occupies residues 128 to 148; that stretch reads ITKTIAALIILWALALTQFGG. Residues 149–157 are Cytoplasmic-facing; sequence TKYTARIAK. The chain crosses the membrane as a helical span at residues 158–178; it reads VGFFAGILLPAFILIALAAIY. Topologically, residues 179 to 200 are periplasmic; that stretch reads LHSGAPVAIEMDSKTFFPDFSK. Residues 201–221 traverse the membrane as a helical segment; it reads VGTLVVFVAFILSYMGVEASA. The Cytoplasmic portion of the chain corresponds to 222-239; sequence THVNEMSNPGRDYPLAML. A helical membrane pass occupies residues 240 to 260; the sequence is LLMVAAICLSSVGGLSIAMVI. Residues 261 to 291 lie on the Periplasmic side of the membrane; the sequence is PGNEINLSAGVMQTFTVLMSHVAPEIEWTVR. A helical membrane pass occupies residues 292-312; the sequence is VISALLLLGVLAEIASWIVGP. Topologically, residues 313-335 are cytoplasmic; it reads SRGMYVTAQKNLLPAAFAKMNKN. A helical membrane pass occupies residues 336–356; it reads GVPVTLVISQLVITSIALIIL. Residues 357 to 366 lie on the Periplasmic side of the membrane; it reads TNTGGGNNMS. Residues 367–387 form a helical membrane-spanning segment; the sequence is FLIALALTVVIYLCAYFMLFI. Residues 388–412 are Cytoplasmic-facing; the sequence is GYIVLVLKHPDLKRTFNIPGGKGVK. Residues 413 to 433 traverse the membrane as a helical segment; that stretch reads LVVAIVGLLTSIMAFIVSFLP. Residues 434 to 445 are Periplasmic-facing; it reads PDNIQGDSTDMY. A helical transmembrane segment spans residues 446-466; that stretch reads VELLVVSFLVVLALPFILYAV. Topologically, residues 467 to 511 are cytoplasmic; it reads HDRKGKANTGVTLEPINSQNAPKGHFFLHPRARSPHYIVMNDKKH.

The protein belongs to the amino acid-polyamine-organocation (APC) superfamily. Glutamate:GABA antiporter (GGA) (TC 2.A.3.7) family.

It localises to the cell inner membrane. It carries out the reaction 4-aminobutanoate(in) + L-glutamate(out) = 4-aminobutanoate(out) + L-glutamate(in). Its activity is regulated as follows. Shows pH-dependent activity. The glutamate analog L-trans-pyrrolidine-2,4-dicarboxylic acid (L-PDC) blocks the uptake of glutamate by selective inhibition. Involved in glutaminase-dependent acid resistance. Exchanges extracellular glutamate (Glu) for intracellular gamma-aminobutyric acid (GABA) under acidic conditions. The ability to survive the extremely acidic conditions of the stomach is essential for successful colonization of the host by commensal and pathogenic bacteria. The sequence is that of Glutamate/gamma-aminobutyrate antiporter (gadC) from Escherichia coli O157:H7.